The primary structure comprises 340 residues: Phenylalanine--tRNA ligase alpha subunit (340 aa).

Position 255 (E255) interacts with Mg(2+).

It belongs to the class-II aminoacyl-tRNA synthetase family. Phe-tRNA synthetase alpha subunit type 1 subfamily. In terms of assembly, tetramer of two alpha and two beta subunits. It depends on Mg(2+) as a cofactor.

It is found in the cytoplasm. It carries out the reaction tRNA(Phe) + L-phenylalanine + ATP = L-phenylalanyl-tRNA(Phe) + AMP + diphosphate + H(+). This Syntrophomonas wolfei subsp. wolfei (strain DSM 2245B / Goettingen) protein is Phenylalanine--tRNA ligase alpha subunit.